A 532-amino-acid chain; its full sequence is Tyrosinase (532 aa).

The N-terminal stretch at methionine 1 to glycine 22 is a signal peptide. Over glutamine 23–tryptophan 479 the chain is Lumenal, melanosome. Asparagine 90, asparagine 115, and asparagine 165 each carry an N-linked (GlcNAc...) asparagine glycan. Residues histidine 184, histidine 206, and histidine 215 each contribute to the Cu cation site. 2 N-linked (GlcNAc...) asparagine glycosylation sites follow: asparagine 234 and asparagine 341. Positions 367 and 371 each coordinate Cu cation. The N-linked (GlcNAc...) asparagine glycan is linked to asparagine 375. Cu cation is bound at residue histidine 394. A helical transmembrane segment spans residues leucine 480–leucine 500. Residues threonine 501 to leucine 532 lie on the Cytoplasmic side of the membrane.

The protein belongs to the tyrosinase family. In terms of assembly, active tyrosinase has been found as a homodimer and homotetramer. It depends on Cu(2+) as a cofactor. As to expression, frog skin.

The protein localises to the melanosome membrane. The catalysed reaction is 2 L-dopa + O2 = 2 L-dopaquinone + 2 H2O. It carries out the reaction L-tyrosine + O2 = L-dopaquinone + H2O. Activated by trypsin, chymotrypsin and subtilisin. Activated by alpha-chymotrypsin, thermolysin and Pronase. Inhibited by its product L-DOPA and tyrosine. Functionally, this is a copper-containing oxidase that functions in the formation of pigments such as melanins and other polyphenolic compounds. Catalyzes the initial and rate limiting step in the cascade of reactions leading to melanin production from tyrosine. In addition to hydroxylating tyrosine to DOPA (3,4-dihydroxyphenylalanine), also catalyzes the oxidation of DOPA to DOPA-quinone. This chain is Tyrosinase, found in Pelophylax lessonae (Pool frog).